Reading from the N-terminus, the 203-residue chain is Ponticulin-like protein H (203 aa).

Positions 1–20 are cleaved as a signal peptide; sequence MKLLNSLVLLAALCAITANG. A glycan (N-linked (GlcNAc...) asparagine) is linked at Asn58. Residues 127–168 show a composition bias toward low complexity; sequence SDSTNPTSTPSTTPSATPTVTPSTTPTVTPTVTPSTTPTVAP. A disordered region spans residues 127–183; that stretch reads SDSTNPTSTPSTTPSATPTVTPSTTPTVTPTVTPSTTPTVAPTVPPTTPPSTTTGSG. A lipid anchor (GPI-like-anchor amidated serine) is attached at Ser182. The propeptide at 183–203 is removed in mature form; it reads GSTVVASFGLIVSILLASLAL.

This sequence belongs to the ponticulin family. In terms of processing, the GPI-like-anchor contains a phosphoceramide group, rather than a phosphatidyl group.

It localises to the cell membrane. In terms of biological role, binds F-actin and nucleates actin assembly. The polypeptide is Ponticulin-like protein H (ponH) (Dictyostelium discoideum (Social amoeba)).